The chain runs to 291 residues: Porphobilinogen deaminase (291 aa).

Position 233 is an S-(dipyrrolylmethanemethyl)cysteine (Cys-233).

It belongs to the HMBS family. In terms of assembly, monomer. It depends on dipyrromethane as a cofactor.

It carries out the reaction 4 porphobilinogen + H2O = hydroxymethylbilane + 4 NH4(+). It participates in porphyrin-containing compound metabolism; protoporphyrin-IX biosynthesis; coproporphyrinogen-III from 5-aminolevulinate: step 2/4. In terms of biological role, tetrapolymerization of the monopyrrole PBG into the hydroxymethylbilane pre-uroporphyrinogen in several discrete steps. The sequence is that of Porphobilinogen deaminase (hemC) from Ruminiclostridium josui (Clostridium josui).